A 161-amino-acid polypeptide reads, in one-letter code: NADH-quinone oxidoreductase subunit I (161 aa).

4Fe-4S ferredoxin-type domains follow at residues 52–82 (LRRY…IESE) and 92–121 (SRYD…ETRV). Positions 62, 65, 68, 72, 101, 104, 107, and 111 each coordinate [4Fe-4S] cluster.

It belongs to the complex I 23 kDa subunit family. In terms of assembly, NDH-1 is composed of 14 different subunits. Subunits NuoA, H, J, K, L, M, N constitute the membrane sector of the complex. Requires [4Fe-4S] cluster as cofactor.

The protein resides in the cell inner membrane. It carries out the reaction a quinone + NADH + 5 H(+)(in) = a quinol + NAD(+) + 4 H(+)(out). NDH-1 shuttles electrons from NADH, via FMN and iron-sulfur (Fe-S) centers, to quinones in the respiratory chain. The immediate electron acceptor for the enzyme in this species is believed to be ubiquinone. Couples the redox reaction to proton translocation (for every two electrons transferred, four hydrogen ions are translocated across the cytoplasmic membrane), and thus conserves the redox energy in a proton gradient. This chain is NADH-quinone oxidoreductase subunit I, found in Azoarcus sp. (strain BH72).